A 160-amino-acid chain; its full sequence is Endoribonuclease YbeY (160 aa).

Residues His111, His115, and His121 each contribute to the Zn(2+) site.

The protein belongs to the endoribonuclease YbeY family. It depends on Zn(2+) as a cofactor.

The protein resides in the cytoplasm. Its function is as follows. Single strand-specific metallo-endoribonuclease involved in late-stage 70S ribosome quality control and in maturation of the 3' terminus of the 16S rRNA. In Stutzerimonas stutzeri (strain A1501) (Pseudomonas stutzeri), this protein is Endoribonuclease YbeY.